The following is a 327-amino-acid chain: MAIFNNTTSSSSNFLLTAFPGLECAHVWISIPVCCLYTIALLGNSMIFLVIITKRRLHKPMYYFLSMLAAVDLCLTITTLPTVLGVLWFHAREISFKACFIQMFFVHAFSLLESSVLVAMAFDRFVAICNPLNYATILTDRMVLVIGLVICIRPAVFLLPLLVAINTVSFHGGHELSHPFCYHPEVIKYTYSKPWISSFWGLFLQLYLNGTDVLFILFSYVLILRTVLGIVARKKQQKALSTCVCHICAVTIFYVPLISLSLAHRLFHSTPRVLCSTLANIYLLLPPVLNPIIYSLKTKTIRQAMFQLLQSKGSWGFNVRGLRGRWD.

The Extracellular portion of the chain corresponds to 1–27; sequence MAIFNNTTSSSSNFLLTAFPGLECAHV. N-linked (GlcNAc...) asparagine glycosylation is found at N5 and N6. Residues 28 to 48 form a helical membrane-spanning segment; that stretch reads WISIPVCCLYTIALLGNSMIF. Residues 49–56 are Cytoplasmic-facing; it reads LVIITKRR. Residues 57-77 form a helical membrane-spanning segment; the sequence is LHKPMYYFLSMLAAVDLCLTI. Residues 78–101 lie on the Extracellular side of the membrane; the sequence is TTLPTVLGVLWFHAREISFKACFI. A helical membrane pass occupies residues 102-122; sequence QMFFVHAFSLLESSVLVAMAF. The Cytoplasmic segment spans residues 123–141; sequence DRFVAICNPLNYATILTDR. Residues 142–162 form a helical membrane-spanning segment; sequence MVLVIGLVICIRPAVFLLPLL. At 163–198 the chain is on the extracellular side; it reads VAINTVSFHGGHELSHPFCYHPEVIKYTYSKPWISS. A helical membrane pass occupies residues 199-219; the sequence is FWGLFLQLYLNGTDVLFILFS. Topologically, residues 220-239 are cytoplasmic; sequence YVLILRTVLGIVARKKQQKA. A helical transmembrane segment spans residues 240–260; that stretch reads LSTCVCHICAVTIFYVPLISL. At 261–275 the chain is on the extracellular side; sequence SLAHRLFHSTPRVLC. A helical transmembrane segment spans residues 276–296; the sequence is STLANIYLLLPPVLNPIIYSL. Residues 297-327 lie on the Cytoplasmic side of the membrane; sequence KTKTIRQAMFQLLQSKGSWGFNVRGLRGRWD.

It belongs to the G-protein coupled receptor 1 family.

Its subcellular location is the cell membrane. Its function is as follows. Odorant receptor. The chain is Olfactory receptor 51T1 (OR51T1) from Homo sapiens (Human).